We begin with the raw amino-acid sequence, 156 residues long: Small ribosomal subunit protein uS7c (156 aa).

Belongs to the universal ribosomal protein uS7 family. Part of the 30S ribosomal subunit.

It localises to the plastid. Its subcellular location is the chloroplast. Its function is as follows. One of the primary rRNA binding proteins, it binds directly to 16S rRNA where it nucleates assembly of the head domain of the 30S subunit. This Chlorella vulgaris (Green alga) protein is Small ribosomal subunit protein uS7c (rps7).